Here is a 509-residue protein sequence, read N- to C-terminus: ATP synthase subunit alpha (509 aa).

169 to 176 (GDRQTGKT) lines the ATP pocket.

This sequence belongs to the ATPase alpha/beta chains family. As to quaternary structure, F-type ATPases have 2 components, CF(1) - the catalytic core - and CF(0) - the membrane proton channel. CF(1) has five subunits: alpha(3), beta(3), gamma(1), delta(1), epsilon(1). CF(0) has three main subunits: a(1), b(2) and c(9-12). The alpha and beta chains form an alternating ring which encloses part of the gamma chain. CF(1) is attached to CF(0) by a central stalk formed by the gamma and epsilon chains, while a peripheral stalk is formed by the delta and b chains.

The protein resides in the cell inner membrane. The enzyme catalyses ATP + H2O + 4 H(+)(in) = ADP + phosphate + 5 H(+)(out). Produces ATP from ADP in the presence of a proton gradient across the membrane. The alpha chain is a regulatory subunit. The chain is ATP synthase subunit alpha from Methylorubrum populi (strain ATCC BAA-705 / NCIMB 13946 / BJ001) (Methylobacterium populi).